We begin with the raw amino-acid sequence, 96 residues long: Co-chaperonin GroES (96 aa).

The protein belongs to the GroES chaperonin family. As to quaternary structure, heptamer of 7 subunits arranged in a ring. Interacts with the chaperonin GroEL.

The protein resides in the cytoplasm. Functionally, together with the chaperonin GroEL, plays an essential role in assisting protein folding. The GroEL-GroES system forms a nano-cage that allows encapsulation of the non-native substrate proteins and provides a physical environment optimized to promote and accelerate protein folding. GroES binds to the apical surface of the GroEL ring, thereby capping the opening of the GroEL channel. This is Co-chaperonin GroES from Myxococcus xanthus (strain DK1622).